The chain runs to 303 residues: Recombination-associated protein RdgC (303 aa).

Belongs to the RdgC family.

Its subcellular location is the cytoplasm. The protein resides in the nucleoid. In terms of biological role, may be involved in recombination. This chain is Recombination-associated protein RdgC, found in Yersinia enterocolitica serotype O:8 / biotype 1B (strain NCTC 13174 / 8081).